A 254-amino-acid polypeptide reads, in one-letter code: Type III pantothenate kinase (254 aa).

6–13 (DVGNSNIV) lines the ATP pocket. Substrate contacts are provided by residues Tyr100 and 107-110 (GADR). Asp109 serves as the catalytic Proton acceptor. Asp129 serves as a coordination point for K(+). Thr132 is a binding site for ATP. A substrate-binding site is contributed by Thr184.

Belongs to the type III pantothenate kinase family. Homodimer. The cofactor is NH4(+). Requires K(+) as cofactor.

The protein localises to the cytoplasm. It carries out the reaction (R)-pantothenate + ATP = (R)-4'-phosphopantothenate + ADP + H(+). Its pathway is cofactor biosynthesis; coenzyme A biosynthesis; CoA from (R)-pantothenate: step 1/5. In terms of biological role, catalyzes the phosphorylation of pantothenate (Pan), the first step in CoA biosynthesis. This is Type III pantothenate kinase from Citrifermentans bemidjiense (strain ATCC BAA-1014 / DSM 16622 / JCM 12645 / Bem) (Geobacter bemidjiensis).